Reading from the N-terminus, the 341-residue chain is Protein MENT (341 aa).

The first 23 residues, 1 to 23 (MVPAAGALLWVLLLNLGPRAAGA), serve as a signal peptide directing secretion. The disordered stretch occupies residues 115 to 196 (AGKDSTSREL…SPSPTAMPSP (82 aa)). Positions 127–155 (ATPNTAGSSSTRFIANSQEPEIRLTSSLP) are enriched in polar residues.

In terms of processing, phosphorylation sites are present in the extracellular medium. Plasma. Overexpressed in lymphomas.

The protein localises to the secreted. In terms of biological role, involved in control of cellular proliferation. Onconcogenic modifier contributing to the tumor suppressor function of DNMT3B. The protein is Protein MENT (MENT) of Homo sapiens (Human).